Here is a 572-residue protein sequence, read N- to C-terminus: Vacuolar protein sorting-associated protein vps901 (572 aa).

2 stretches are compositionally biased toward basic and acidic residues: residues 1-31 and 39-53; these read MDYP…EKPL and DEQR…KNHD. The segment at 1 to 108 is disordered; the sequence is MDYPSFHEDP…HENNPGQQEI (108 aa). The segment covering 69-80 has biased composition (polar residues); sequence QYEQTDSSSDQE. Residues 82–98 are compositionally biased toward basic and acidic residues; sequence MNEKQSLDKENRNDNIP. The VPS9 domain occupies 219–357; that stretch reads VEEDRVLSEK…IETLDCSSLT (139 aa). Residues 430-502 form a disordered region; the sequence is QIDTPESKEY…IVHEEQPVDD (73 aa). A compositionally biased stretch (polar residues) spans 445-457; it reads PRGSSHSGSFTTD. Residues 529–571 form the CUE domain; it reads REKAEAITALRAMFPAFDSEVIEVVLNAQQGRLSSSIDSLLEM.

Functionally, required for vacuolar protein sorting; may be required for the consumption of transport vesicles containing vacuolar protein precursors. Required for vacuolar fusion. The chain is Vacuolar protein sorting-associated protein vps901 (vps901) from Schizosaccharomyces pombe (strain 972 / ATCC 24843) (Fission yeast).